The following is a 1012-amino-acid chain: Translation initiation factor IF-2, chloroplastic (1012 aa).

Low complexity predominate over residues Gly-75 to Leu-102. Disordered regions lie at residues Gly-75 to Arg-132, Glu-147 to Lys-294, and Ala-319 to Gly-340. The segment covering Ser-152–Pro-175 has biased composition (polar residues). Residues Ser-183–Ser-194 show a composition bias toward low complexity. Residues Val-208–Glu-231 show a composition bias toward basic and acidic residues. A compositionally biased stretch (pro residues) spans Pro-240–Pro-257. The span at Val-277–Lys-294 shows a compositional bias: basic and acidic residues. The tr-type G domain occupies Asp-488–Lys-661. The G1 stretch occupies residues Gly-497–Thr-504. Residue Gly-497–Thr-504 coordinates GTP. The interval Gly-522–Gly-526 is G2. Positions Asp-547 to Gly-550 are G3. GTP-binding positions include Asp-547 to His-551 and Asn-601 to Asp-604. The interval Asn-601 to Asp-604 is G4. Residues Ser-637–Leu-639 are G5.

The protein belongs to the TRAFAC class translation factor GTPase superfamily. Classic translation factor GTPase family. IF-2 subfamily.

The protein localises to the plastid. The protein resides in the chloroplast. Its function is as follows. One of the essential components for the initiation of protein synthesis. Protects formylmethionyl-tRNA from spontaneous hydrolysis and promotes its binding to the 30S ribosomal subunits. Also involved in the hydrolysis of GTP during the formation of the 70S ribosomal complex. The chain is Translation initiation factor IF-2, chloroplastic (IF2CP) from Phaseolus vulgaris (Kidney bean).